Consider the following 226-residue polypeptide: MSRVRLVIAQCTVDYIGRLTAHLPSARRLLLFKADGSVSVHADDRAYKPLNWMSPPCWLTEESGGQAPVWVVENKAGEQLRITIEGIEHDSSHELGVDPGLVKDGVEAHLQALLAEHIQLLGEGYTLVRREYMTAIGPVDLLCRDERGGSVAVEIKRRGEIDGVEQLTRYLELLNRDSVLAPVKGVFAAQQIKPQARILATDRGIRCLTLDYDTMRGMDSGEYRLF.

This sequence belongs to the NucS endonuclease family.

The protein resides in the cytoplasm. Cleaves both 3' and 5' ssDNA extremities of branched DNA structures. This Mycobacterium tuberculosis (strain CDC 1551 / Oshkosh) protein is Endonuclease NucS.